An 85-amino-acid polypeptide reads, in one-letter code: MTTKRKVEVFSAGCPSCQTAIELVNRLACGSCEVSILDMNDINVAKRARDLGVRSVPAVAINGQLASCCSGSGIEEQALRWPRQA.

This is an uncharacterized protein from Acidithiobacillus ferrooxidans (Thiobacillus ferrooxidans).